The primary structure comprises 100 residues: Apolipoprotein C-II (100 aa).

Positions M1–A22 are cleaved as a signal peptide. Residues S66 to M74 form a lipid binding region. The interval S78 to E100 is lipoprotein lipase cofactor.

The protein belongs to the apolipoprotein C2 family. Post-translationally, proapolipoprotein C-II is synthesized as a sialic acid containing glycoprotein which is subsequently desialylated prior to its proteolytic processing. In terms of processing, proapolipoprotein C-II, the major form found in plasma undergoes proteolytic cleavage of its N-terminal hexapeptide to generate the mature form apolipoprotein C-II, which occurs as the minor form in plasma.

The protein localises to the secreted. Functionally, component of chylomicrons, very low-density lipoproteins (VLDL), low-density lipoproteins (LDL), and high-density lipoproteins (HDL) in plasma. Plays an important role in lipoprotein metabolism as an activator of lipoprotein lipase. The chain is Apolipoprotein C-II (APOC2) from Microtus ochrogaster (Prairie vole).